The chain runs to 229 residues: Pdp3-interacting factor 1 (229 aa).

D12 acts as the Nucleophile in catalysis. Residues D12, D14, and D176 each contribute to the Mg(2+) site. The active-site Proton donor is D14.

This sequence belongs to the HAD-like hydrolase superfamily. Component of the mst2 complex composed of at least eaf6, mst2, nto1, pdp3, ptf1, ptf2 and tfg3. Mg(2+) serves as cofactor.

It localises to the cytoplasm. It is found in the nucleus. It catalyses the reaction D-ribitol 5-phosphate + H2O = ribitol + phosphate. The enzyme catalyses D-sorbitol 6-phosphate + H2O = D-sorbitol + phosphate. The catalysed reaction is sn-glycerol 1-phosphate + H2O = glycerol + phosphate. It carries out the reaction D-erythrose 4-phosphate + H2O = D-erythrose + phosphate. Functionally, component of the mst2 complex which is a highly specific H3 lysine 14 (H3K14) acetyltransferase that functions together with gcn5 to regulate global levels of H3K14 acetylation (H3K14ac), critical for DNA damage checkpoint activation. In terms of biological role, may also function as a sugar alcohol (polyol) phosphatase that prevents accumulation of toxic levels of polyol phosphates, which can impair glycolysis by inhibiting glucose-6-phosphate isomerase. This chain is Pdp3-interacting factor 1, found in Schizosaccharomyces pombe (strain 972 / ATCC 24843) (Fission yeast).